Here is a 172-residue protein sequence, read N- to C-terminus: dCTP deaminase, dUMP-forming (172 aa).

DCTP is bound by residues 93 to 98 (RSSVGR), Asp-111, 119 to 121 (TLE), Gln-138, and Tyr-151. The Proton donor/acceptor role is filled by Glu-121.

This sequence belongs to the dCTP deaminase family. Homotrimer.

It carries out the reaction dCTP + 2 H2O = dUMP + NH4(+) + diphosphate. It participates in pyrimidine metabolism; dUMP biosynthesis; dUMP from dCTP: step 1/1. Bifunctional enzyme that catalyzes both the deamination of dCTP to dUTP and the hydrolysis of dUTP to dUMP without releasing the toxic dUTP intermediate. In Hathewaya histolytica (Clostridium histolyticum), this protein is dCTP deaminase, dUMP-forming.